Reading from the N-terminus, the 153-residue chain is Prostaglandin E synthase (153 aa).

At 1–13 the chain is on the lumenal side; that stretch reads MPPPVLALVSGQA. The chain crosses the membrane as a helical span at residues 14–42; sequence LPAFLLCSTLLVIKMYVVAVITGQVRLRK. Arginine 39 contributes to the glutathione binding site. Residues 43–61 lie on the Cytoplasmic side of the membrane; the sequence is KAFANPEDALRHGGLQYCR. A helical transmembrane segment spans residues 62–91; the sequence is SDQDVDRCLRAHRNDMETIYPFLFLGFVYS. 74-78 contacts glutathione; that stretch reads RNDME. The Lumenal portion of the chain corresponds to 92 to 96; it reads FLGPD. Residues 97–120 form a helical membrane-spanning segment; sequence PFIAQMHFLVFFLGRMVHTVAYLG. 2 residues coordinate glutathione: histidine 114 and tyrosine 118. At 121-124 the chain is on the cytoplasmic side; it reads KLRA. A helical transmembrane segment spans residues 125 to 153; sequence PTRSLAYTVAQLPCASMALQIVWEAACHL. 127 to 131 serves as a coordination point for glutathione; it reads RSLAY.

It belongs to the MAPEG family. In terms of assembly, homotrimer. Glutathione is required as a cofactor.

The protein resides in the membrane. The protein localises to the cytoplasm. Its subcellular location is the perinuclear region. It catalyses the reaction prostaglandin H2 = prostaglandin E2. The catalysed reaction is 2-glyceryl-prostaglandin H2 = 2-glyceryl-prostaglandin E2. It carries out the reaction prostaglandin G2 = (15S)-15-hydroperoxy-prostaglandin E2. The enzyme catalyses 1-chloro-2,4-dinitrobenzene + glutathione = 2,4-dinitrophenyl-S-glutathione + chloride + H(+). It catalyses the reaction (5S)-hydroperoxy-(6E,8Z,11Z,14Z)-eicosatetraenoate + 2 glutathione = (5S)-hydroxy-(6E,8Z,11Z,14Z)-eicosatetraenoate + glutathione disulfide + H2O. Its pathway is lipid metabolism; prostaglandin biosynthesis. Its function is as follows. Terminal enzyme of the cyclooxygenase (COX)-2-mediated prostaglandin E2 (PGE2) biosynthetic pathway. Catalyzes the glutathione-dependent oxidoreduction of prostaglandin endoperoxide H2 (PGH2) to prostaglandin E2 (PGE2) in response to inflammatory stimuli. Plays a key role in inflammation response, fever and pain. Also catalyzes the oxidoreduction of endocannabinoids into prostaglandin glycerol esters and PGG2 into 15-hydroperoxy-PGE2. In addition, displays low glutathione transferase and glutathione-dependent peroxidase activities, toward 1-chloro-2,4-dinitrobenzene and 5-hydroperoxyicosatetraenoic acid (5-HPETE), respectively. This chain is Prostaglandin E synthase (PTGES), found in Canis lupus familiaris (Dog).